The following is a 1395-amino-acid chain: DNA-directed RNA polymerase subunit beta' (1395 aa).

Residues Cys-70, Cys-72, Cys-85, and Cys-88 each contribute to the Zn(2+) site. Residues Asp-470, Asp-472, and Asp-474 each contribute to the Mg(2+) site. The Zn(2+) site is built by Cys-815, Cys-889, Cys-896, and Cys-899.

The protein belongs to the RNA polymerase beta' chain family. In terms of assembly, the RNAP catalytic core consists of 2 alpha, 1 beta, 1 beta' and 1 omega subunit. When a sigma factor is associated with the core the holoenzyme is formed, which can initiate transcription. Mg(2+) serves as cofactor. Requires Zn(2+) as cofactor.

The catalysed reaction is RNA(n) + a ribonucleoside 5'-triphosphate = RNA(n+1) + diphosphate. Its function is as follows. DNA-dependent RNA polymerase catalyzes the transcription of DNA into RNA using the four ribonucleoside triphosphates as substrates. In Anaeromyxobacter sp. (strain Fw109-5), this protein is DNA-directed RNA polymerase subunit beta'.